We begin with the raw amino-acid sequence, 155 residues long: Endoribonuclease YbeY (155 aa).

Zn(2+) contacts are provided by H113, H117, and H123.

This sequence belongs to the endoribonuclease YbeY family. Zn(2+) is required as a cofactor.

It localises to the cytoplasm. In terms of biological role, single strand-specific metallo-endoribonuclease involved in late-stage 70S ribosome quality control and in maturation of the 3' terminus of the 16S rRNA. In Ureaplasma parvum serovar 3 (strain ATCC 27815 / 27 / NCTC 11736), this protein is Endoribonuclease YbeY.